A 273-amino-acid chain; its full sequence is Undecaprenyl-diphosphatase (273 aa).

Transmembrane regions (helical) follow at residues 4–24 (LILIKAFLLGIVEGLTEFLPI), 43–63 (KAQVFTVAIQLGAILSVCWEY), 82–102 (FVLNLCVAFLPAAILGLLFIK), 108–128 (LFHPLPVAIALVTGGVLILWA), 183–203 (AAEFSFFLAIPIMFAATFYDV), 217–237 (MFVVGSIAAFISALIAIRGFI), and 253–273 (IGFGLIVLLTAHFGLINWSAG).

Belongs to the UppP family.

It localises to the cell inner membrane. The enzyme catalyses di-trans,octa-cis-undecaprenyl diphosphate + H2O = di-trans,octa-cis-undecaprenyl phosphate + phosphate + H(+). In terms of biological role, catalyzes the dephosphorylation of undecaprenyl diphosphate (UPP). Confers resistance to bacitracin. The polypeptide is Undecaprenyl-diphosphatase (Nitrosomonas eutropha (strain DSM 101675 / C91 / Nm57)).